The following is a 324-amino-acid chain: Glyoxylate/hydroxypyruvate reductase B (324 aa).

Active-site residues include Arg-237 and Glu-266. His-285 functions as the Proton donor in the catalytic mechanism.

This sequence belongs to the D-isomer specific 2-hydroxyacid dehydrogenase family. GhrB subfamily. As to quaternary structure, homodimer.

It localises to the cytoplasm. The enzyme catalyses glycolate + NADP(+) = glyoxylate + NADPH + H(+). It catalyses the reaction (R)-glycerate + NAD(+) = 3-hydroxypyruvate + NADH + H(+). The catalysed reaction is (R)-glycerate + NADP(+) = 3-hydroxypyruvate + NADPH + H(+). In terms of biological role, catalyzes the NADPH-dependent reduction of glyoxylate and hydroxypyruvate into glycolate and glycerate, respectively. This Shigella dysenteriae serotype 1 (strain Sd197) protein is Glyoxylate/hydroxypyruvate reductase B.